We begin with the raw amino-acid sequence, 155 residues long: Small ribosomal subunit protein uS7cz/uS7cy (155 aa).

This sequence belongs to the universal ribosomal protein uS7 family. In terms of assembly, part of the 30S ribosomal subunit.

Its subcellular location is the plastid. It is found in the chloroplast. One of the primary rRNA binding proteins, it binds directly to 16S rRNA where it nucleates assembly of the head domain of the 30S subunit. This Morus indica (Mulberry) protein is Small ribosomal subunit protein uS7cz/uS7cy (rps7-A).